The sequence spans 174 residues: Large ribosomal subunit protein uL10 (174 aa).

Belongs to the universal ribosomal protein uL10 family. In terms of assembly, part of the ribosomal stalk of the 50S ribosomal subunit. The N-terminus interacts with L11 and the large rRNA to form the base of the stalk. The C-terminus forms an elongated spine to which L12 dimers bind in a sequential fashion forming a multimeric L10(L12)X complex.

Its function is as follows. Forms part of the ribosomal stalk, playing a central role in the interaction of the ribosome with GTP-bound translation factors. In Anaeromyxobacter sp. (strain Fw109-5), this protein is Large ribosomal subunit protein uL10.